Here is a 256-residue protein sequence, read N- to C-terminus: POU domain class 2-associating factor 1 (256 aa).

The tract at residues 1 to 23 is disordered; sequence MLWQKPTAPEQAPAPPRPYQGVR. The OCA domain maps to 16–38; that stretch reads PRPYQGVRVKEPVKELLRRKRGH.

This sequence belongs to the POU2AF family. In terms of assembly, interacts with POU2F1/OCT1 and POU2F2/OCT2; the interaction increases POU2F1 and POU2F2 transactivation activity. In terms of processing, ubiquitinated; mediated by SIAH1 or SIAH2 and leading to its subsequent proteasomal degradation.

It is found in the nucleus. Transcriptional coactivator that specifically associates with either POU2F1/OCT1 or POU2F2/OCT2. It boosts the POU2F1/OCT1 mediated promoter activity and to a lesser extent, that of POU2F2/OCT2. It recognizes the POU domains of POU2F1/OCT1 and POU2F2/OCT2. It is essential for the response of B-cells to antigens and required for the formation of germinal centers. Regulates IL6 expression in B cells as POU2F2/OCT2 coactivator. This is POU domain class 2-associating factor 1 (POU2AF1) from Bos taurus (Bovine).